The primary structure comprises 1030 residues: E3 ubiquitin-protein ligase mib1 (1030 aa).

In terms of domain architecture, MIB/HERC2 1 spans 6-74 (NNRVMMEGVG…AYDVRILDSA (69 aa)). The ZZ-type zinc-finger motif lies at 80-132 (HDGTMCDTCRQQPIIGIRWKCAECTNYDLCTTCYHGDKHHLRHRFYRITTPGS). Zn(2+)-binding residues include Cys-85, Cys-88, Cys-100, Cys-103, Cys-109, Cys-112, His-118, and His-122. The MIB/HERC2 2 domain occupies 143-221 (SKKITARGIF…MSDLKCVQDA (79 aa)). 9 ANK repeats span residues 430–460 (DINEELVKAAANGDLAKVEDILKRPDVDVNG), 463–492 (AGHTAMQAASQNGHVDVLKLLLKHSVDLEA), 496–525 (DGDRAVHHASFGDEGSVIEVLHRGGADLNA), 529–558 (RRQTPLHIAVNKGHLQVVKTLLDFGCHPSL), 562–591 (EGDTPLHDAISKKRDDMLSVLLEAGADVTI), 595–627 (NGFNALHHAALRGNPSAMRVLLSKLPRPWIVDE), 631–661 (DGYTALHLAALNNHVEVAELLVHQGNANLDV), 665–694 (NQQTALHLAVERQHTQIVRLLVRAEAKLDV), and 698–727 (DGDTPLHEALRHHTLSQLRQLQDMQDVSKV). 2 RING-type zinc fingers span residues 817-852 (CMVCSDMKRDTLFGPCGHIATCSLCSPRVKKCLICK) and 864-899 (CVVCSDKKAAVLFQPCGHMCACENCASLMKKCVQCR). A coiled-coil region spans residues 957 to 986 (ALQRDKDNTNVNADVQKLQQQLQDIKEQTM). Residues 987-1020 (CPVCLDRLKNMIFMCGHGTCQLCGDRMSECPICR) form an RING-type 3 zinc finger.

As to quaternary structure, interacts with deltaA (dla) and deltaD (dld).

The protein localises to the cytoplasm. It localises to the cytoskeleton. Its subcellular location is the microtubule organizing center. The protein resides in the centrosome. It is found in the centriolar satellite. The protein localises to the cell membrane. It catalyses the reaction S-ubiquitinyl-[E2 ubiquitin-conjugating enzyme]-L-cysteine + [acceptor protein]-L-lysine = [E2 ubiquitin-conjugating enzyme]-L-cysteine + N(6)-ubiquitinyl-[acceptor protein]-L-lysine.. The protein operates within protein modification; protein ubiquitination. Its function is as follows. E3 ubiquitin-protein ligase that mediates ubiquitination of Delta receptors, which act as ligands of Notch proteins. Positively regulates the Delta-mediated Notch signaling by ubiquitinating the intracellular domain of Delta, leading to endocytosis of Delta receptors. It thereby participates in many processes regulated by the Notch signaling pathway, such as midline cell fate specification prior to germ layer formation, patterning of sensory cell differentiation in the ear, neurogenesis of the hindbrain and commitment to a secretory fate in the intestine. Essential for early embryonic development. The chain is E3 ubiquitin-protein ligase mib1 (mib1) from Danio rerio (Zebrafish).